A 450-amino-acid polypeptide reads, in one-letter code: UDP-N-acetylmuramoylalanine--D-glutamate ligase (450 aa).

119–125 contributes to the ATP binding site; that stretch reads GSNGKTT.

It belongs to the MurCDEF family.

Its subcellular location is the cytoplasm. The catalysed reaction is UDP-N-acetyl-alpha-D-muramoyl-L-alanine + D-glutamate + ATP = UDP-N-acetyl-alpha-D-muramoyl-L-alanyl-D-glutamate + ADP + phosphate + H(+). Its pathway is cell wall biogenesis; peptidoglycan biosynthesis. Functionally, cell wall formation. Catalyzes the addition of glutamate to the nucleotide precursor UDP-N-acetylmuramoyl-L-alanine (UMA). The chain is UDP-N-acetylmuramoylalanine--D-glutamate ligase from Bacillus cereus (strain AH187).